Here is a 472-residue protein sequence, read N- to C-terminus: MAPPVIEEYLGSRPSMERCVLLRAQRRNMTRVLNFDRKLFLSLVVKSRRRFFKKLGGSEKEIAARIEEYFSRQRRLEKLGQILTVLELQSVIVSEFTRTLGSLTTPTPAINAAVRRVDAPRARALASRALNSYAVLPPPEEAAPMARHKHSDLVEVVKRLVKEHLRRHNKRCVCYGSYALHLLNPEIEYGDIDMVQTNARPFLINLAFLIYFVTGRQTVLLRVPYLKNYVVLQDEEGGHILDSFNVRQATLRALPTLLVDNIYVLHPFVQLMAMLKMFSQTDRIRDLADNFDKARARMETLLAFALEELGEAPADGRTPLPCAFLPPEGGASRVLEADARALDCGFARAVVFLDEPALVQTLLDMGVQDDEIVDFESVSNSAFLVRDNTLFTYFSNTVLMDGDAVHDLSRRGVSAHIVMFLLLTRHPAAEGAVRSMLGSLVSDARPVTSVVERERKTGTHGVIDIAKNVITH.

Residues Asp191 and Asp193 contribute to the active site.

The protein belongs to the poxviridae poly(A) polymerase catalytic subunit family. Heterodimer of a large (catalytic) subunit and a small (regulatory) subunit.

The catalysed reaction is RNA(n) + ATP = RNA(n)-3'-adenine ribonucleotide + diphosphate. Functionally, polymerase that creates the 3'-poly(A) tail of mRNA's. The protein is Poly(A) polymerase catalytic subunit (PAPL) of Capra hircus (Goat).